The primary structure comprises 865 residues: Bifunctional uridylyltransferase/uridylyl-removing enzyme (865 aa).

The interval 1–318 (MPHVDLNPLK…FPRPDSDARL (318 aa)) is uridylyltransferase. The segment at 319 to 675 (IDDDFRNLRE…VRPTEHGEGL (357 aa)) is uridylyl-removing. An HD domain is found at 437–559 (VDQHTLAVVR…VGDERRLAAL (123 aa)). 2 consecutive ACT domains span residues 676–762 (QVMV…RLPH) and 789–865 (RLSV…QQAA). Residues 747-767 (DPHAARHAHAPRRLPHSHARR) form a disordered region. Over residues 751-767 (ARHAHAPRRLPHSHARR) the composition is skewed to basic residues.

It belongs to the GlnD family. Mg(2+) serves as cofactor.

The enzyme catalyses [protein-PII]-L-tyrosine + UTP = [protein-PII]-uridylyl-L-tyrosine + diphosphate. The catalysed reaction is [protein-PII]-uridylyl-L-tyrosine + H2O = [protein-PII]-L-tyrosine + UMP + H(+). Its activity is regulated as follows. Uridylyltransferase (UTase) activity is inhibited by glutamine, while glutamine activates uridylyl-removing (UR) activity. Functionally, modifies, by uridylylation and deuridylylation, the PII regulatory proteins (GlnB and homologs), in response to the nitrogen status of the cell that GlnD senses through the glutamine level. Under low glutamine levels, catalyzes the conversion of the PII proteins and UTP to PII-UMP and PPi, while under higher glutamine levels, GlnD hydrolyzes PII-UMP to PII and UMP (deuridylylation). Thus, controls uridylylation state and activity of the PII proteins, and plays an important role in the regulation of nitrogen assimilation and metabolism. The chain is Bifunctional uridylyltransferase/uridylyl-removing enzyme from Bordetella parapertussis (strain 12822 / ATCC BAA-587 / NCTC 13253).